Reading from the N-terminus, the 270-residue chain is Putative pyruvate, phosphate dikinase regulatory protein 2 (270 aa).

151-158 provides a ligand contact to ADP; that stretch reads GVSRTSKT.

It belongs to the pyruvate, phosphate/water dikinase regulatory protein family. PDRP subfamily.

It carries out the reaction N(tele)-phospho-L-histidyl/L-threonyl-[pyruvate, phosphate dikinase] + ADP = N(tele)-phospho-L-histidyl/O-phospho-L-threonyl-[pyruvate, phosphate dikinase] + AMP + H(+). The enzyme catalyses N(tele)-phospho-L-histidyl/O-phospho-L-threonyl-[pyruvate, phosphate dikinase] + phosphate + H(+) = N(tele)-phospho-L-histidyl/L-threonyl-[pyruvate, phosphate dikinase] + diphosphate. Its function is as follows. Bifunctional serine/threonine kinase and phosphorylase involved in the regulation of the pyruvate, phosphate dikinase (PPDK) by catalyzing its phosphorylation/dephosphorylation. In Listeria monocytogenes serovar 1/2a (strain ATCC BAA-679 / EGD-e), this protein is Putative pyruvate, phosphate dikinase regulatory protein 2.